Here is a 142-residue protein sequence, read N- to C-terminus: HTH-type transcriptional regulator MntR (142 aa).

Residues 1–63 form the HTH dtxR-type domain; the sequence is MPTPSMEDYI…YEKYRGLVLT (63 aa). The Mn(2+) site is built by D8, E11, H77, E99, E102, and H103.

It belongs to the DtxR/MntR family. Homodimer.

It localises to the cytoplasm. DNA binding is strongly activated by Mn(2+). In terms of biological role, central regulator of manganese homeostasis. This is HTH-type transcriptional regulator MntR from Bacillus cereus (strain AH820).